Consider the following 63-residue polypeptide: Large ribosomal subunit protein bL28 (63 aa).

Belongs to the bacterial ribosomal protein bL28 family.

In Solibacter usitatus (strain Ellin6076), this protein is Large ribosomal subunit protein bL28.